A 193-amino-acid chain; its full sequence is Segregation and condensation protein B (193 aa).

The protein belongs to the ScpB family. As to quaternary structure, homodimer. Homodimerization may be required to stabilize the binding of ScpA to the Smc head domains. Component of a cohesin-like complex composed of ScpA, ScpB and the Smc homodimer, in which ScpA and ScpB bind to the head domain of Smc. The presence of the three proteins is required for the association of the complex with DNA.

It localises to the cytoplasm. Functionally, participates in chromosomal partition during cell division. May act via the formation of a condensin-like complex containing Smc and ScpA that pull DNA away from mid-cell into both cell halves. This is Segregation and condensation protein B from Streptococcus thermophilus (strain CNRZ 1066).